Consider the following 492-residue polypeptide: Regulatory protein ViaA (492 aa).

It belongs to the ViaA family. In terms of assembly, homodimer. Interacts with RavA.

The protein resides in the cytoplasm. In terms of biological role, component of the RavA-ViaA chaperone complex, which may act on the membrane to optimize the function of some of the respiratory chains. ViaA stimulates the ATPase activity of RavA. The sequence is that of Regulatory protein ViaA from Pectobacterium carotovorum subsp. carotovorum (strain PC1).